The chain runs to 245 residues: DNA polymerase sliding clamp (245 aa).

Belongs to the PCNA family. In terms of assembly, homotrimer. The subunits circularize to form a toroid; DNA passes through its center. Replication factor C (RFC) is required to load the toroid on the DNA.

In terms of biological role, sliding clamp subunit that acts as a moving platform for DNA processing. Responsible for tethering the catalytic subunit of DNA polymerase and other proteins to DNA during high-speed replication. This Methanosarcina acetivorans (strain ATCC 35395 / DSM 2834 / JCM 12185 / C2A) protein is DNA polymerase sliding clamp.